The primary structure comprises 181 residues: Protein GrpE (181 aa).

The tract at residues 1 to 21 is disordered; sequence MNKEQQDLQTEQEAAVETAEL. Over residues 8-21 the composition is skewed to low complexity; sequence LQTEQEAAVETAEL.

The protein belongs to the GrpE family. Homodimer.

It localises to the cytoplasm. Participates actively in the response to hyperosmotic and heat shock by preventing the aggregation of stress-denatured proteins, in association with DnaK and GrpE. It is the nucleotide exchange factor for DnaK and may function as a thermosensor. Unfolded proteins bind initially to DnaJ; upon interaction with the DnaJ-bound protein, DnaK hydrolyzes its bound ATP, resulting in the formation of a stable complex. GrpE releases ADP from DnaK; ATP binding to DnaK triggers the release of the substrate protein, thus completing the reaction cycle. Several rounds of ATP-dependent interactions between DnaJ, DnaK and GrpE are required for fully efficient folding. This Trichlorobacter lovleyi (strain ATCC BAA-1151 / DSM 17278 / SZ) (Geobacter lovleyi) protein is Protein GrpE.